The following is a 220-amino-acid chain: MGAAARSLRLALGLLLLATLLRPADACSCSPVHPQQAFCNADVVIRAKAVSEKEVDSGNDIYGNPIKRIQYEIKQIKMFKGPDKDIEFIYTAPSSAVCGVSLDVGGKKEYLIAGKAEGDGKMHITLCDFIVPWDTLSITQKKSLNHRYQMGCECKITRCPMIPCYISSPDECLWMDWVTEKSINGHQAKFFACIKRSDGSCAWYRGAAPPKQEFLDIEDP.

Positions 1-26 are cleaved as a signal peptide; that stretch reads MGAAARSLRLALGLLLLATLLRPADA. Cys27 is a Zn(2+) binding site. Involved in metalloproteinase-binding stretches follow at residues 27-30 and 95-96; these read CSCS and SA. Disulfide bonds link Cys27–Cys98, Cys29–Cys127, Cys39–Cys152, Cys154–Cys201, Cys159–Cys164, and Cys172–Cys193. One can recognise an NTR domain in the interval 27–152; that stretch reads CSCSPVHPQQ…SLNHRYQMGC (126 aa).

It belongs to the protease inhibitor I35 (TIMP) family. As to quaternary structure, interacts (via the C-terminal) with MMP2 (via the C-terminal PEX domain); the interaction inhibits the MMP2 activity. The activity of TIMP2 is dependent on the presence of disulfide bonds.

It is found in the secreted. In terms of biological role, complexes with metalloproteinases (such as collagenases) and irreversibly inactivates them by binding to their catalytic zinc cofactor. This chain is Metalloproteinase inhibitor 2 (Timp2), found in Rattus norvegicus (Rat).